We begin with the raw amino-acid sequence, 192 residues long: Imidazoleglycerol-phosphate dehydratase (192 aa).

This sequence belongs to the imidazoleglycerol-phosphate dehydratase family.

It localises to the cytoplasm. It catalyses the reaction D-erythro-1-(imidazol-4-yl)glycerol 3-phosphate = 3-(imidazol-4-yl)-2-oxopropyl phosphate + H2O. It participates in amino-acid biosynthesis; L-histidine biosynthesis; L-histidine from 5-phospho-alpha-D-ribose 1-diphosphate: step 6/9. In Staphylococcus aureus (strain MRSA252), this protein is Imidazoleglycerol-phosphate dehydratase.